The sequence spans 524 residues: Bifunctional methyltransferase (524 aa).

Residues 1-306 (MQCSIKQILS…GHSRVILFSP (306 aa)) form a hemK region. Residues 1–308 (MQCSIKQILS…SRVILFSPIN (308 aa)) are RF MTase. S-adenosyl-L-methionine-binding positions include 146–150 (GTGSG), Asp169, Trp198, Asn213, Glu353, Glu378, Asn405, and Asp427. A substrate-binding site is contributed by 213 to 216 (NPPY). Positions 307–524 (INLNRSYARR…MILRHVLGDH (218 aa)) are tRNA (guanine-N(7)-)-methyltransferase. A tRNA MTase region spans residues 311–524 (RSYARRIGKS…MILRHVLGDH (214 aa)). Residue Asp427 is part of the active site. Residues Lys431 and Asp463 each contribute to the substrate site.

This sequence in the C-terminal section; belongs to the class I-like SAM-binding methyltransferase superfamily. TrmB family. In the N-terminal section; belongs to the protein N5-glutamine methyltransferase family. PrmC subfamily.

The catalysed reaction is L-glutaminyl-[peptide chain release factor] + S-adenosyl-L-methionine = N(5)-methyl-L-glutaminyl-[peptide chain release factor] + S-adenosyl-L-homocysteine + H(+). It carries out the reaction guanosine(46) in tRNA + S-adenosyl-L-methionine = N(7)-methylguanosine(46) in tRNA + S-adenosyl-L-homocysteine. Functionally, methylates the class 1 translation termination release factors RF1/PrfA and RF2/PrfB on the glutamine residue of the universally conserved GGQ motif. In terms of biological role, catalyzes the formation of N(7)-methylguanine at position 46 (m7G46) in tRNA. The protein is Bifunctional methyltransferase (prmC/trmB) of Rickettsia conorii (strain ATCC VR-613 / Malish 7).